We begin with the raw amino-acid sequence, 481 residues long: UDP-N-acetylmuramate--L-alanine ligase (481 aa).

Residue 135–141 (GTHGKTT) participates in ATP binding.

The protein belongs to the MurCDEF family.

It localises to the cytoplasm. The enzyme catalyses UDP-N-acetyl-alpha-D-muramate + L-alanine + ATP = UDP-N-acetyl-alpha-D-muramoyl-L-alanine + ADP + phosphate + H(+). The protein operates within cell wall biogenesis; peptidoglycan biosynthesis. Cell wall formation. In Nostoc punctiforme (strain ATCC 29133 / PCC 73102), this protein is UDP-N-acetylmuramate--L-alanine ligase.